An 86-amino-acid chain; its full sequence is Splicing factor 3B subunit 5 (86 aa).

The residue at position 2 (threonine 2) is an N-acetylthreonine. Serine 9 is modified (phosphoserine). Positions 15–76 (QSKYIGTGHA…NLMEKMLQPC (62 aa)) are interaction with SF3B1 and SF3B3. N6-acetyllysine is present on lysine 17.

It belongs to the SF3B5 family. Component of the 17S U2 SnRNP complex, a ribonucleoprotein complex that contains small nuclear RNA (snRNA) U2 and a number of specific proteins. Part of the SF3B subcomplex of the 17S U2 SnRNP complex. SF3B associates with the splicing subcomplex SF3A and a 12S RNA unit to form the U2 small nuclear ribonucleoproteins complex (U2 snRNP). Within the SF3B subcomplex, interacts directly with SF3B1 (via HEAT domain) and SF3B3. Component of the minor spliceosome, which splices U12-type introns.

The protein resides in the nucleus. Its function is as follows. Component of the 17S U2 SnRNP complex of the spliceosome, a large ribonucleoprotein complex that removes introns from transcribed pre-mRNAs. The 17S U2 SnRNP complex (1) directly participates in early spliceosome assembly and (2) mediates recognition of the intron branch site during pre-mRNA splicing by promoting the selection of the pre-mRNA branch-site adenosine, the nucleophile for the first step of splicing. Within the 17S U2 SnRNP complex, SF3B4 is part of the SF3B subcomplex, which is required for 'A' complex assembly formed by the stable binding of U2 snRNP to the branchpoint sequence in pre-mRNA. Sequence independent binding of SF3A and SF3B subcomplexes upstream of the branch site is essential, it may anchor U2 snRNP to the pre-mRNA. Also acts as a component of the minor spliceosome, which is involved in the splicing of U12-type introns in pre-mRNAs. The chain is Splicing factor 3B subunit 5 (SF3B5) from Bos taurus (Bovine).